The primary structure comprises 311 residues: Pyrimidine-specific ribonucleoside hydrolase RihA (311 aa).

Residue His-240 is part of the active site.

It belongs to the IUNH family. RihA subfamily.

In terms of biological role, hydrolyzes cytidine or uridine to ribose and cytosine or uracil, respectively. In Shigella flexneri serotype 5b (strain 8401), this protein is Pyrimidine-specific ribonucleoside hydrolase RihA.